The following is a 142-amino-acid chain: E1B protein, small T-antigen (142 aa).

Belongs to the adenoviridae E1B 19 kDa protein family.

It is found in the host cell membrane. The protein localises to the host nucleus envelope. Its subcellular location is the host nucleus lamina. In terms of biological role, putative adenovirus Bcl-2 homolog that inhibits apoptosis induced by TNF or FAS pathways, as well as p53-mediated apoptosis. Without E1B 19K function, virus production is compromised because of premature death of host cell. Interacts with Bax protein in cell lysates. This is E1B protein, small T-antigen from Homo sapiens (Human).